The primary structure comprises 478 residues: MVPGSPAAGAGPAPRALSLAARLSYAVGHFLNDLCASMWFTYLLLYLHSVRAYSSRGAGLLLLLGQVADGLCTPLVGYEADRAAGRCARCGPRKAWHLVGTVCVLLSFPFIFSPCLGCGAATPEWAALLYYGPFIVVFQFGWAATQIAHLSLIPELVTSDHEKVELTALRYAFTVVANITVFGAAWLLLRLQGSAREGPPDEAGDHLGVQDVPVFRTLSLCVVGVGAVFSLLFHLGTRERRRPPAQEPDERSPLLAPATARPLLLWKHWLREPSFYQVGLLYMSTRLIVNLSQTYIAMYLTYSLNLPKKFIATIPLVMYVSGFCSSFLMKPVNKCIGRNMTYFVGLLVILAFAAWVVLVDELGMAVYVAAVLLGGGCATILVTSLAMTADLIGPHTHSGAFVYGAMSFSDKVANGLAVMVIQSLHPCSLELCCRACVGFYHWVMVAVTGGVGVAATLSLCSLLVWPIRLRSWDPGAQP.

M1 carries the N-acetylmethionine modification. Topologically, residues 1-26 are cytoplasmic; sequence MVPGSPAAGAGPAPRALSLAARLSYA. Residues 27–47 traverse the membrane as a helical segment; the sequence is VGHFLNDLCASMWFTYLLLYL. Over 48–56 the chain is Lumenal; the sequence is HSVRAYSSR. A helical membrane pass occupies residues 57-77; it reads GAGLLLLLGQVADGLCTPLVG. Topologically, residues 78 to 97 are cytoplasmic; that stretch reads YEADRAAGRCARCGPRKAWH. A helical membrane pass occupies residues 98 to 118; the sequence is LVGTVCVLLSFPFIFSPCLGC. Residues 119–124 lie on the Lumenal side of the membrane; sequence GAATPE. The helical transmembrane segment at 125-145 threads the bilayer; that stretch reads WAALLYYGPFIVVFQFGWAAT. Residues 146–168 are Cytoplasmic-facing; it reads QIAHLSLIPELVTSDHEKVELTA. The chain crosses the membrane as a helical span at residues 169–189; sequence LRYAFTVVANITVFGAAWLLL. Over 190 to 216 the chain is Lumenal; the sequence is RLQGSAREGPPDEAGDHLGVQDVPVFR. The helical transmembrane segment at 217–237 threads the bilayer; that stretch reads TLSLCVVGVGAVFSLLFHLGT. Over 238-277 the chain is Cytoplasmic; sequence RERRRPPAQEPDERSPLLAPATARPLLLWKHWLREPSFYQ. A helical membrane pass occupies residues 278–300; sequence VGLLYMSTRLIVNLSQTYIAMYL. The Lumenal segment spans residues 301-308; it reads TYSLNLPK. A helical transmembrane segment spans residues 309–329; it reads KFIATIPLVMYVSGFCSSFLM. Topologically, residues 330-338 are cytoplasmic; sequence KPVNKCIGR. Residues 339 to 359 traverse the membrane as a helical segment; it reads NMTYFVGLLVILAFAAWVVLV. Residues 360–361 lie on the Lumenal side of the membrane; that stretch reads DE. Residues 362–382 traverse the membrane as a helical segment; the sequence is LGMAVYVAAVLLGGGCATILV. The Cytoplasmic portion of the chain corresponds to 383 to 400; it reads TSLAMTADLIGPHTHSGA. The chain crosses the membrane as a helical span at residues 401–421; it reads FVYGAMSFSDKVANGLAVMVI. Topologically, residues 422-436 are lumenal; it reads QSLHPCSLELCCRAC. The chain crosses the membrane as a helical span at residues 437 to 457; the sequence is VGFYHWVMVAVTGGVGVAATL. The Cytoplasmic segment spans residues 458–478; the sequence is SLCSLLVWPIRLRSWDPGAQP.

The protein belongs to the major facilitator superfamily.

It is found in the melanosome membrane. The protein localises to the lysosome membrane. It carries out the reaction L-cysteine(in) = L-cysteine(out). Functionally, transporter that mediates the import of cysteine into melanosomes, thereby regulating skin/hair pigmentation. In melanosomes, cysteine import is required both for normal levels of cystine, the oxidized dimer of cysteine, and provide cysteine for the production of the cysteinyldopas used in pheomelanin synthesis, thereby regulating skin/hair pigmentation. Also catalyzes import of cysteine into lysosomes in non-pigmented cells, regulating lysosomal cystine and cysteine storage, which is essnetial for redox homeostasis. This Equus caballus (Horse) protein is Major facilitator superfamily domain-containing protein 12.